An 865-amino-acid polypeptide reads, in one-letter code: Leucine-rich repeat-containing protein 66 (865 aa).

Residues 4–24 traverse the membrane as a helical segment; sequence FYARVTVMVTGLCFVGTVTNP. Residue Asn-42 is glycosylated (N-linked (GlcNAc...) asparagine). LRR repeat units follow at residues 138-160, 161-182, 185-206, 209-230, and 235-255; these read RLKV…WKLK, PLCS…GFHG, QLKS…AFKG, KLQV…VTIA, and NLEL…ANFQ. Asn-248 carries an N-linked (GlcNAc...) asparagine glycan. Residues 366–386 form a helical membrane-spanning segment; that stretch reads ALAVCLSVFITFVVAFCLGAF. Disordered regions lie at residues 463–522 and 654–749; these read RMLG…PGQH and DTPS…AESV. Residues 470–479 are compositionally biased toward polar residues; sequence MDPSSQQSPG. The segment covering 675-688 has biased composition (basic and acidic residues); that stretch reads AVQRDASFDPHDDL. Positions 702 to 713 are enriched in polar residues; it reads FTLSSEGSQDTR. Phosphoserine is present on residues Ser-714 and Ser-748. Residues 728–759 enclose the LRRNT domain; that stretch reads SQPLPSRNLGEYKDSVTSAESVEDITSQQTLE. Residue Asn-787 is glycosylated (N-linked (GlcNAc...) asparagine). The interval 840–865 is disordered; it reads FPNIDSSPSPPCSDQDPSDPEEHDTK. Residues 855 to 865 are compositionally biased toward acidic residues; sequence DPSDPEEHDTK.

Its subcellular location is the membrane. The sequence is that of Leucine-rich repeat-containing protein 66 (Lrrc66) from Rattus norvegicus (Rat).